The following is a 636-amino-acid chain: MTCAALLFRDTRSVPEKINLKVDGTLPSTMNLARNFSIIAHIDHGKSTLADKLLELTGTVQKREMKQQFLDNMDLERERGITIKLQAARMRYIMNDEPYCLNLIDTPGHVDFSYEVSRSLAACEGALLVVDASQGVEAQTLANVYLALENDLEIIPVLNKIDLPGAEPDRVAQEIEEIIGMDCSNAIRCSAKEGIGITEILDAIVTKIPPPQNTAISPLRALIFDSYYDPYRGVIVYFRVVDGSIKKGDKICFMASGKEYVADEIGVLSPNQMQVSELYAGEVGYLSASIRSVADARVGDTITHSSKRAECALPGYSQATPMVFCGLFPIDADQFEELREALEKLQLNDAALKAVTRFSMQFEPESSSAMGFGFRCGFLGLLHMEIVQERLEREYNLNLIITAPSVVYHVNLADGETVECSNPSLLPEPGKRRSIEEPYVKIDMLTPKEYIGPIMELGQERRGEFKEMNFITENRASVVYELPLAEMVGDFFDQLKSRSKGYASMEYSLIGYRESNLVKLDIQINGDPVEALSTIVHRDKAYSVGRALTQKLKELIPRQMFRVPIQACIGAKVIASEALSAIRKDVLSKCYGGDISRKKKLLKKQAEGKKRMKAIGRVDVPQEAFMAVLKLEKEVL.

One can recognise a tr-type G domain in the interval 31–212 (NLARNFSIIA…AIVTKIPPPQ (182 aa)). GTP is bound by residues 40–47 (AHIDHGKS), 105–109 (DTPGH), and 159–162 (NKID).

Belongs to the TRAFAC class translation factor GTPase superfamily. Classic translation factor GTPase family. LepA subfamily.

It localises to the plastid. The protein localises to the chloroplast. It carries out the reaction GTP + H2O = GDP + phosphate + H(+). Promotes chloroplast protein synthesis. May act as a fidelity factor of the translation reaction, by catalyzing a one-codon backward translocation of tRNAs on improperly translocated ribosomes. The chain is Translation factor GUF1 homolog, chloroplastic from Oryza sativa subsp. indica (Rice).